Reading from the N-terminus, the 201-residue chain is Large ribosomal subunit protein uL4 (201 aa).

The segment at 45–71 is disordered; the sequence is AQKTRAEVTGSGKKPWRQKGTGRARAG.

Belongs to the universal ribosomal protein uL4 family. Part of the 50S ribosomal subunit.

Functionally, one of the primary rRNA binding proteins, this protein initially binds near the 5'-end of the 23S rRNA. It is important during the early stages of 50S assembly. It makes multiple contacts with different domains of the 23S rRNA in the assembled 50S subunit and ribosome. In terms of biological role, forms part of the polypeptide exit tunnel. The protein is Large ribosomal subunit protein uL4 of Shewanella pealeana (strain ATCC 700345 / ANG-SQ1).